The chain runs to 266 residues: MMALGAAGATRVFVAMVAAALGGHPLLGVSATLNSVLNSNAIKNLPPPLGGAAGHPGSAVSAAPGILYPGGNKYQTIDNYQPYPCAEDEECGTDEYCASPTRGGDAGVQICLACRKRRKRCMRHAMCCPGNYCKNGICVSSDQNHFRGEIEETITESFGNDHSTLDGYSRRTTLSSKMYHTKGQEGSVCLRSSDCASGLCCARHFWSKICKPVLKEGQVCTKHRRKGSHGLEIFQRCYCGEGLSCRIQKDHHQASNSSRLHTCQRH.

Positions 1-31 (MMALGAAGATRVFVAMVAAALGGHPLLGVSA) are cleaved as a signal peptide. Ser61 carries O-linked (GalNAc...) serine glycosylation. 10 disulfide bridges follow: Cys85/Cys97, Cys91/Cys111, Cys114/Cys128, Cys121/Cys133, Cys127/Cys138, Cys189/Cys201, Cys195/Cys210, Cys200/Cys237, Cys220/Cys245, and Cys239/Cys263. The interval 85–138 (CAEDEECGTDEYCASPTRGGDAGVQICLACRKRRKRCMRHAMCCPGNYCKNGIC) is DKK-type Cys-1. The tract at residues 189–263 (CLRSSDCASG…ASNSSRLHTC (75 aa)) is DKK-type Cys-2. N-linked (GlcNAc...) asparagine glycosylation occurs at Asn256.

It belongs to the dickkopf family. As to quaternary structure, interacts with LRP6. Interacts (via the C-terminal Cys-rich domain) with LRP5 (via beta-propeller regions 3 and 4); the interaction, enhanced by MESD and or KREMEN, antagonizes Wnt-mediated signaling. Forms a ternary complex with LRP6 and KREM1. Interacts with KREM1. Placenta.

It is found in the secreted. Antagonizes canonical Wnt signaling by inhibiting LRP5/6 interaction with Wnt and by forming a ternary complex with the transmembrane protein KREMEN that promotes internalization of LRP5/6. DKKs play an important role in vertebrate development, where they locally inhibit Wnt regulated processes such as antero-posterior axial patterning, limb development, somitogenesis and eye formation. In the adult, Dkks are implicated in bone formation and bone disease, cancer and Alzheimer disease. Inhibits the pro-apoptotic function of KREMEN1 in a Wnt-independent manner, and has anti-apoptotic activity. This is Dickkopf-related protein 1 (DKK1) from Homo sapiens (Human).